The primary structure comprises 331 residues: UDP-N-acetylenolpyruvoylglucosamine reductase (331 aa).

Residues arginine 54–glycine 221 form the FAD-binding PCMH-type domain. Arginine 200 is an active-site residue. The active-site Proton donor is serine 251. Glutamate 321 is a catalytic residue.

The protein belongs to the MurB family. The cofactor is FAD.

It is found in the cytoplasm. The catalysed reaction is UDP-N-acetyl-alpha-D-muramate + NADP(+) = UDP-N-acetyl-3-O-(1-carboxyvinyl)-alpha-D-glucosamine + NADPH + H(+). The protein operates within cell wall biogenesis; peptidoglycan biosynthesis. Its function is as follows. Cell wall formation. This is UDP-N-acetylenolpyruvoylglucosamine reductase from Nostoc sp. (strain PCC 7120 / SAG 25.82 / UTEX 2576).